Consider the following 465-residue polypeptide: Antithrombin-III (465 aa).

An N-terminal signal peptide occupies residues 1 to 32 (MISNGIGTVTTGKRSMCLFPLLLIGLWGCVTC). Disulfide bonds link Cys-41/Cys-161 and Cys-54/Cys-128. Thr-64 carries the phosphothreonine modification. At Ser-69 the chain carries Phosphoserine. Trp-82 serves as a coordination point for heparin. Residue Asn-129 is glycosylated (N-linked (GlcNAc...) asparagine). Arg-162 is a heparin binding site. A glycan (N-linked (GlcNAc...) asparagine) is linked at Asn-168. Heparin is bound at residue Arg-178. 2 N-linked (GlcNAc...) asparagine glycosylation sites follow: Asn-188 and Asn-225. Residues Cys-280 and Cys-463 are joined by a disulfide bond.

Belongs to the serpin family. In terms of assembly, forms protease inhibiting heterodimer with TMPRSS7. In terms of processing, phosphorylated by FAM20C in the extracellular medium. As to expression, plasma.

The protein resides in the secreted. It localises to the extracellular space. Most important serine protease inhibitor in plasma that regulates the blood coagulation cascade. AT-III inhibits thrombin, matriptase-3/TMPRSS7, as well as factors IXa, Xa and XIa. Its inhibitory activity is greatly enhanced in the presence of heparin. In Ovis aries (Sheep), this protein is Antithrombin-III (SERPINC1).